Here is an 839-residue protein sequence, read N- to C-terminus: LPS-assembly protein LptD (839 aa).

Residues 1–21 form the signal peptide; the sequence is MAIGITACVLSLINYQGLAYS.

The protein belongs to the LptD family. In terms of assembly, component of the lipopolysaccharide transport and assembly complex. Interacts with LptE and LptA.

The protein resides in the cell outer membrane. In terms of biological role, together with LptE, is involved in the assembly of lipopolysaccharide (LPS) at the surface of the outer membrane. The sequence is that of LPS-assembly protein LptD from Legionella pneumophila (strain Paris).